The sequence spans 284 residues: Deoxyribonuclease-1 (284 aa).

A signal peptide spans 1–22 (MRYTGLMGILLTLVNLLQLAAT). A glycan (N-linked (GlcNAc...) asparagine) is linked at asparagine 40. Residue glutamate 100 is part of the active site. A disulfide bridge links cysteine 123 with cysteine 126. A glycan (N-linked (GlcNAc...) asparagine) is linked at asparagine 128. Histidine 156 is an active-site residue. The cysteines at positions 195 and 231 are disulfide-linked.

It belongs to the DNase I family. The cofactor is Ca(2+). Mg(2+) is required as a cofactor.

The protein resides in the secreted. It is found in the zymogen granule. The protein localises to the nucleus envelope. It catalyses the reaction Endonucleolytic cleavage to 5'-phosphodinucleotide and 5'-phosphooligonucleotide end-products.. Serum endocuclease secreted into body fluids by a wide variety of exocrine and endocrine organs. Expressed by non-hematopoietic tissues and preferentially cleaves protein-free DNA. Among other functions, seems to be involved in cell death by apoptosis. Binds specifically to G-actin and blocks actin polymerization. Together with DNASE1L3, plays a key role in degrading neutrophil extracellular traps (NETs). NETs are mainly composed of DNA fibers and are released by neutrophils to bind pathogens during inflammation. Degradation of intravascular NETs by DNASE1 and DNASE1L3 is required to prevent formation of clots that obstruct blood vessels and cause organ damage following inflammation. In Rattus norvegicus (Rat), this protein is Deoxyribonuclease-1 (Dnase1).